We begin with the raw amino-acid sequence, 217 residues long: MKFFVDTADVKEIRELNDLGLVDGVTTNPSLILKSGRDIIEVTKEICNIVKGPVSAEVAATEYEQMMKEAAVIARIADNICIKLPVTLDGLKACKALTSEGHKVNMTLCFSANQALLAAKAGATFISPFIGRLDDTGINGMELIAEIRTIYDNYDFRTEILAASVRTVNHVKEAALIGADVVTAPPATLKALVKHPLTYKGLETFLADWAKTGQKIA.

Lysine 83 acts as the Schiff-base intermediate with substrate in catalysis.

Belongs to the transaldolase family. Type 3B subfamily.

It is found in the cytoplasm. It carries out the reaction D-sedoheptulose 7-phosphate + D-glyceraldehyde 3-phosphate = D-erythrose 4-phosphate + beta-D-fructose 6-phosphate. It participates in carbohydrate degradation; pentose phosphate pathway; D-glyceraldehyde 3-phosphate and beta-D-fructose 6-phosphate from D-ribose 5-phosphate and D-xylulose 5-phosphate (non-oxidative stage): step 2/3. Transaldolase is important for the balance of metabolites in the pentose-phosphate pathway. This Brucella melitensis biotype 1 (strain ATCC 23456 / CCUG 17765 / NCTC 10094 / 16M) protein is Probable transaldolase.